The sequence spans 203 residues: MIYISMFKFLFKILIGEIMIKLLYEGILIRENGIIKKASSSSTLIITDNNNIIVDTSTKDMENIIIKGLSELNLSPNDIDVVINTHLHYDHIENNPIFKNATFYASPKEFGFNDNFEDFKKFKDKEIEIIETPGHTYGSISVIYKDYVVVGDASPLKNNILKMIPPKLNVDEKLALESLKKIRKLRKNVITGHEGIVYKEKLL.

Zn(2+) is bound by residues His-86, His-88, Asp-90, His-91, His-135, Asp-152, and His-193.

This sequence belongs to the metallo-beta-lactamase superfamily. Requires Zn(2+) as cofactor.

This chain is Probable metallo-hydrolase MJ0296, found in Methanocaldococcus jannaschii (strain ATCC 43067 / DSM 2661 / JAL-1 / JCM 10045 / NBRC 100440) (Methanococcus jannaschii).